A 217-amino-acid chain; its full sequence is Protein matrimony (217 aa).

Residues 39–41 (STP) carry the POLO box domain (PBD)-binding motif. A phosphoserine mark is found at S63 and S66. The segment at 83–106 (KQQQQQQHQHCHRTQLKPPPFVLP) is disordered. In terms of domain architecture, SAM spans 157–217 (NHAANVEQIL…NRIMDVLHTL (61 aa)).

In terms of assembly, interacts with polo. Interacts with cort. Probably ubiquitinated: degraded during the oocyte-to-embryo transition by the anaphase promoting complex/cyclosome (APC/C) containing cort protein.

It is found in the nucleus. The protein resides in the chromosome. Polo kinase inhibitor required to maintain G2 arrest in the meiotic cell cycle in females. Holds heterochromatically paired homologs together from the end of pachytene until metaphase I. Haploinsufficient locus for homologous achiasmate segregation and may be required for the maintenance of heterochromatic pairings. This Drosophila melanogaster (Fruit fly) protein is Protein matrimony.